Reading from the N-terminus, the 1611-residue chain is SH3 domain-containing protein C23A1.17 (1611 aa).

An SH3 domain is found at 3–67 (SFPTRVVALY…PKDFTEPAED (65 aa)). 4 disordered regions span residues 275–648 (THPA…PTSL), 662–741 (IDPP…PPGL), 762–851 (AVPR…NSLN), and 886–1365 (TPST…FSAK). Residues 278–296 (AASSTMATESSHQSPSADS) are compositionally biased toward polar residues. Residues 300–312 (ELSKSQRVAKDDD) show a composition bias toward basic and acidic residues. A compositionally biased stretch (polar residues) spans 316-330 (VSNTANSDEPASSSK). Acidic residues-rich tracts occupy residues 361–373 (SEQE…DAES) and 387–420 (SEPE…QIDP). The span at 421–433 (EEAKRIALRERMA) shows a compositional bias: basic and acidic residues. Residues 472 to 494 (STTNDSSPPKDSSSTSTQPTEQS) are compositionally biased toward low complexity. The span at 576–586 (TQETSEQQVHK) shows a compositional bias: polar residues. Residues 605 to 619 (FDKETLASNEAHEAV) show a composition bias toward basic and acidic residues. Low complexity predominate over residues 637 to 648 (SSSVVTPSPTSL). Composition is skewed to polar residues over residues 799–808 (SRPSTGSQLR), 886–902 (TPST…SNVA), and 923–940 (ATHQ…QLGS). 3 stretches are compositionally biased toward pro residues: residues 963-974 (PAAPPSIPPPLP), 1022-1053 (PPVP…PPVP), and 1076-1241 (IPAP…PVPA). The segment covering 1242–1278 (PSSEAPSVSTPRSSVPSPHSNASPSPTSSSMASAAPA) has biased composition (low complexity). Phosphoserine occurs at positions 1258, 1261, and 1266. Positions 1300–1312 (KSSKSGEHHHHHN) are enriched in basic residues. The segment covering 1317 to 1327 (DSSSTRTSLAH) has biased composition (polar residues). Residues 1340–1350 (RSSSRASKKPS) are compositionally biased toward low complexity. Polar residues predominate over residues 1351-1362 (IVSTTGPFNESF). Ser1379 is subject to Phosphoserine. Thr1380 carries the post-translational modification Phosphothreonine.

Its subcellular location is the cytoplasm. This Schizosaccharomyces pombe (strain 972 / ATCC 24843) (Fission yeast) protein is SH3 domain-containing protein C23A1.17.